The chain runs to 460 residues: Retinoic acid receptor alpha (460 aa).

Residues Met-1 to Pro-87 are modulating. Positions His-46–Pro-78 are disordered. A compositionally biased stretch (polar residues) spans Gly-52–Glu-69. 2 consecutive NR C4-type zinc fingers follow at residues Cys-88 to Cys-108 and Cys-124 to Cys-148. Residues Cys-88–Met-153 constitute a DNA-binding region (nuclear receptor). Residues Ser-154–Pro-182 form a hinge region. An NR LBD domain is found at Glu-183–Ser-417. The 9aaTAD motif lies at Pro-408–Asn-416. Residues Glu-418–Pro-460 form a disordered region. Over residues Gly-425–Leu-435 the composition is skewed to gly residues. Over residues Cys-442–Pro-460 the composition is skewed to low complexity.

This sequence belongs to the nuclear hormone receptor family. NR1 subfamily. In terms of assembly, heterodimer; with an RXR molecule. Binds DNA preferentially as a RAR/RXR heterodimer. In terms of tissue distribution, ubiquitous.

The protein localises to the nucleus. Receptor for retinoic acid. Retinoic acid receptors bind as heterodimers to their target response elements in response to their ligands, all-trans or 9-cis retinoic acid, and regulate gene expression in various biological processes. The RAR/RXR heterodimers bind to the retinoic acid response elements (RARE) composed of tandem 5'-AGGTCA-3' sites known as DR1-DR5. Required for hindbrain patterning and appears to be required for skin development. The polypeptide is Retinoic acid receptor alpha (RARA) (Gallus gallus (Chicken)).